A 236-amino-acid polypeptide reads, in one-letter code: Nopaline transport system permease protein NocQ (236 aa).

The ABC transmembrane type-1 domain occupies 21–222; the sequence is AMMTVVVAAC…LLSSVSNRGF (202 aa). 4 helical membrane-spanning segments follow: residues 25 to 45, 63 to 83, 102 to 122, and 199 to 219; these read VVVA…FAAA, VVRG…GGTL, IFVI…TEVI, and QPFT…SVSN.

It belongs to the binding-protein-dependent transport system permease family. HisMQ subfamily.

The protein localises to the cell inner membrane. Component of the nopaline active transport system probably consisting of four subunits: Q, M, P and T. This system is also capable of transporting octopine provided that catabolic functions are induced with nopaline. The protein is Nopaline transport system permease protein NocQ (nocQ) of Agrobacterium fabrum (strain C58 / ATCC 33970) (Agrobacterium tumefaciens (strain C58)).